A 792-amino-acid chain; its full sequence is Phenylalanine--tRNA ligase beta subunit (792 aa).

The region spanning 39–147 is the tRNA-binding domain; sequence GESLGQVVVA…DDAPVGQALA (109 aa). The region spanning 400–475 is the B5 domain; that stretch reads PQPARIRLRR…RIHGYDRVPT (76 aa). Positions 453, 459, 462, and 463 each coordinate Mg(2+). The 94-residue stretch at 698-791 folds into the FDX-ACB domain; it reads SRFPSVRRDL…IEREHRARIR (94 aa).

It belongs to the phenylalanyl-tRNA synthetase beta subunit family. Type 1 subfamily. As to quaternary structure, tetramer of two alpha and two beta subunits. The cofactor is Mg(2+).

It is found in the cytoplasm. The catalysed reaction is tRNA(Phe) + L-phenylalanine + ATP = L-phenylalanyl-tRNA(Phe) + AMP + diphosphate + H(+). This is Phenylalanine--tRNA ligase beta subunit from Xanthomonas euvesicatoria pv. vesicatoria (strain 85-10) (Xanthomonas campestris pv. vesicatoria).